Here is a 245-residue protein sequence, read N- to C-terminus: Octanoyltransferase (245 aa).

The BPL/LPL catalytic domain maps to 54–238; the sequence is GEATELVWLL…AFENIFGETR (185 aa). Substrate-binding positions include 92–99, 167–169, and 180–182; these read RGGQLTYH, AIG, and GIA. Catalysis depends on Cys-198, which acts as the Acyl-thioester intermediate.

This sequence belongs to the LipB family.

It localises to the cytoplasm. It carries out the reaction octanoyl-[ACP] + L-lysyl-[protein] = N(6)-octanoyl-L-lysyl-[protein] + holo-[ACP] + H(+). It functions in the pathway protein modification; protein lipoylation via endogenous pathway; protein N(6)-(lipoyl)lysine from octanoyl-[acyl-carrier-protein]: step 1/2. Its function is as follows. Catalyzes the transfer of endogenously produced octanoic acid from octanoyl-acyl-carrier-protein onto the lipoyl domains of lipoate-dependent enzymes. Lipoyl-ACP can also act as a substrate although octanoyl-ACP is likely to be the physiological substrate. The protein is Octanoyltransferase of Rhodopseudomonas palustris (strain ATCC BAA-98 / CGA009).